The chain runs to 122 residues: Large ribosomal subunit protein uL14 (122 aa).

It belongs to the universal ribosomal protein uL14 family. As to quaternary structure, part of the 50S ribosomal subunit. Forms a cluster with proteins L3 and L19. In the 70S ribosome, L14 and L19 interact and together make contacts with the 16S rRNA in bridges B5 and B8.

Its function is as follows. Binds to 23S rRNA. Forms part of two intersubunit bridges in the 70S ribosome. In Caldicellulosiruptor saccharolyticus (strain ATCC 43494 / DSM 8903 / Tp8T 6331), this protein is Large ribosomal subunit protein uL14.